The sequence spans 350 residues: Serine/arginine-rich splicing factor RS40 (350 aa).

RRM domains are found at residues 2–74 and 97–168; these read KPVF…WTKS and KTLF…YAVK. Composition is skewed to basic and acidic residues over residues 73-82 and 167-187; these read KSERGGDKRS and VKDDDARGNGHSPERRRDRSP. Disordered regions lie at residues 73–94 and 167–350; these read KSERGGDKRSGGGSRRSSSSMR and VKDD…PADE. Phosphoserine occurs at positions 193, 195, and 211. Basic and acidic residues-rich tracts occupy residues 216-227 and 240-255; these read YRKERTSPDYGR and GSPEYGRDRRGNDSPR. 7 positions are modified to phosphoserine: Ser-241, Ser-262, Ser-278, Ser-298, Ser-308, Ser-335, and Ser-340. Positions 272–289 are enriched in basic and acidic residues; that stretch reads NKRERMSPNHSPFKKESP. Over residues 299-308 the composition is skewed to basic and acidic residues; sequence PIERRERSRS.

It belongs to the splicing factor SR family. RS subfamily. In terms of assembly, component of the spliceosome. Interacts with SNRNP35. Interacts with CYP59. Interacts with RCF3 and CPL1. Interacts with DRB1/HYL1 and SE. In terms of tissue distribution, highly expressed in roots and flowers. A presumably longer alternatively spliced form is found in leaves, stems and flowers.

The protein resides in the nucleus. It localises to the nucleus speckle. Its function is as follows. Required for constitutive and alternative pre-mRNA splicing. Involved in primary miRNA processing and pri-miRNA biogenesis. Binds both intronless and intron-containing pri-miRNAs. The polypeptide is Serine/arginine-rich splicing factor RS40 (RS40) (Arabidopsis thaliana (Mouse-ear cress)).